Reading from the N-terminus, the 228-residue chain is Sec-independent protein translocase protein TatB (228 aa).

Residues 1 to 21 (MFDFGLGELVFVGIIALIVLG) form a helical membrane-spanning segment. 2 disordered regions span residues 126 to 162 (LSDGISDVMPSERSDTSAEILGDSGQTGSTAEPAETD) and 196 to 228 (VPHTTSLRKQAISRKRGLRPKHRAKPKLRVRKS). Residues 206–228 (AISRKRGLRPKHRAKPKLRVRKS) are compositionally biased toward basic residues.

This sequence belongs to the TatB family. As to quaternary structure, the Tat system comprises two distinct complexes: a TatABC complex, containing multiple copies of TatA, TatB and TatC subunits, and a separate TatA complex, containing only TatA subunits. Substrates initially bind to the TatABC complex, which probably triggers association of the separate TatA complex to form the active translocon.

It localises to the cell inner membrane. Its function is as follows. Part of the twin-arginine translocation (Tat) system that transports large folded proteins containing a characteristic twin-arginine motif in their signal peptide across membranes. Together with TatC, TatB is part of a receptor directly interacting with Tat signal peptides. TatB may form an oligomeric binding site that transiently accommodates folded Tat precursor proteins before their translocation. In Neisseria meningitidis serogroup C / serotype 2a (strain ATCC 700532 / DSM 15464 / FAM18), this protein is Sec-independent protein translocase protein TatB.